The primary structure comprises 161 residues: TM2 domain-containing protein DDB_G0278163 (161 aa).

Over 1-24 the chain is Cytoplasmic; it reads MGHHHHHHGGSGHHHHHHHHGSGH. A helical membrane pass occupies residues 25–45; that stretch reads YGGGAVLVTPIVTPVPVVYGS. The Extracellular segment spans residues 46–54; sequence RSSSYCPKS. In terms of domain architecture, TM2 spans 52–100; sequence PKSMTVAYVLWFFFGILGFHRLYLGRVGTFFLYFFTAGVFGLGWLFDAF. The helical transmembrane segment at 55–75 threads the bilayer; that stretch reads MTVAYVLWFFFGILGFHRLYL. The Cytoplasmic portion of the chain corresponds to 76 to 80; it reads GRVGT. The helical transmembrane segment at 81-101 threads the bilayer; it reads FFLYFFTAGVFGLGWLFDAFY. At 102–161 the chain is on the extracellular side; sequence THKMVKHYNECEFTKSCVGQSPPATIPIYQSEGAYPTYQQVPQQPPQFYQPQQQQPQYQP. Residues 139 to 161 form a disordered region; sequence YQQVPQQPPQFYQPQQQQPQYQP.

This sequence belongs to the TM2 family.

It localises to the membrane. The polypeptide is TM2 domain-containing protein DDB_G0278163 (Dictyostelium discoideum (Social amoeba)).